A 162-amino-acid chain; its full sequence is Xanthine-guanine phosphoribosyltransferase (162 aa).

5-phospho-alpha-D-ribose 1-diphosphate is bound by residues 43-44 and 94-102; these read RG and DDLVDTGTT. Asp-95 is a binding site for Mg(2+). Asp-98 and Ile-141 together coordinate guanine. Xanthine is bound by residues Asp-98 and Ile-141. GMP contacts are provided by residues 98–102 and 140–141; these read DTGTT and WI.

Belongs to the purine/pyrimidine phosphoribosyltransferase family. XGPT subfamily. In terms of assembly, homotetramer. The cofactor is Mg(2+).

It localises to the cell inner membrane. It carries out the reaction GMP + diphosphate = guanine + 5-phospho-alpha-D-ribose 1-diphosphate. The enzyme catalyses XMP + diphosphate = xanthine + 5-phospho-alpha-D-ribose 1-diphosphate. It catalyses the reaction IMP + diphosphate = hypoxanthine + 5-phospho-alpha-D-ribose 1-diphosphate. It participates in purine metabolism; GMP biosynthesis via salvage pathway; GMP from guanine: step 1/1. The protein operates within purine metabolism; XMP biosynthesis via salvage pathway; XMP from xanthine: step 1/1. Its function is as follows. Purine salvage pathway enzyme that catalyzes the transfer of the ribosyl-5-phosphate group from 5-phospho-alpha-D-ribose 1-diphosphate (PRPP) to the N9 position of the 6-oxopurines guanine and xanthine to form the corresponding ribonucleotides GMP (guanosine 5'-monophosphate) and XMP (xanthosine 5'-monophosphate), with the release of PPi. To a lesser extent, also acts on hypoxanthine. This is Xanthine-guanine phosphoribosyltransferase from Oleidesulfovibrio alaskensis (strain ATCC BAA-1058 / DSM 17464 / G20) (Desulfovibrio alaskensis).